We begin with the raw amino-acid sequence, 101 residues long: Small ribosomal subunit protein uS14 (101 aa).

Belongs to the universal ribosomal protein uS14 family. As to quaternary structure, part of the 30S ribosomal subunit. Contacts proteins S3 and S10.

Functionally, binds 16S rRNA, required for the assembly of 30S particles and may also be responsible for determining the conformation of the 16S rRNA at the A site. The chain is Small ribosomal subunit protein uS14 from Aeromonas salmonicida (strain A449).